Here is a 440-residue protein sequence, read N- to C-terminus: MIAMDIREIGLRLVGEAIKAADPYRAVLNAVKVSDDKIIVQGKEFEIKGKVYVIALGKAACEMARAIEDILDVEDGVAVTKYGYGKELKRIKVIEAGHPIPDEKSILGAKEALSILNRARENDIVFILISGGGSALFELPEEGISLEDLKLTTDLLLKSGAKIHEINTVRKHISKVKGGKLAKMIKGTGIVLIISDVVGDNLEAIASGPTVKDPTTFEDAKRILELYDIWEKVPESVRLHIERGLRGEVEETLKEDLPNVHNFLIASNSISCEAIAREAQRLGFKAYIMTTTLEGEAKDAGLFIGSIVQEIAERGRPFEPPVVLVFGGETTVTIEGKGGKGGPNQEIALSATRKISDLEALIVAFDTDGTDGPTDAAGGIVDGTTYKKLREKGIDVEKVLKEHNSYEALKKVGGLLFTGPTGTNVNSIVIAIVTSKRGRT.

Position 58 (Lys58) interacts with substrate.

This sequence belongs to the glycerate kinase type-1 family. In terms of assembly, homodimer. The cofactor is Mg(2+). Requires Ni(2+) as cofactor. It depends on Mn(2+) as a cofactor. Co(2+) is required as a cofactor.

The catalysed reaction is (R)-glycerate + ATP = (2R)-2-phosphoglycerate + ADP + H(+). In terms of biological role, catalyzes the ATP-dependent phosphorylation of D-glycerate to 2-phosphoglycerate. It can also utilize GTP, CTP, UTP, ADP or pyrophosphate as phosphate donor. The chain is Glycerate 2-kinase (gck) from Pyrococcus horikoshii (strain ATCC 700860 / DSM 12428 / JCM 9974 / NBRC 100139 / OT-3).